The primary structure comprises 255 residues: MNIAKIVREAREQSRLTTLDFATGIFDEFIQLHGDRSFRDDGAVVGGIGWLGDQAVTVVGIQKGKSLQDNLKRNFGQPHPEGYRKALRLMKQAEKFGRPVVTFINTAGAYPGVGAEERGQGEAIARNLMEMSDLKVPIIAIIIGEGGSGGALALAVADRVWMLENSIYAILSPEGFASILWKDGTRAMEAAELMKITSHELLEMDVVDKVISEIGLSSKELIKSVKKELQTELARLSQKPLEELLEERYQRFRKY.

Residues 1 to 235 (MNIAKIVREA…KKELQTELAR (235 aa)) enclose the CoA carboxyltransferase C-terminal domain.

Belongs to the AccA family. In terms of assembly, acetyl-CoA carboxylase is a heterohexamer composed of biotin carboxyl carrier protein (AccB), biotin carboxylase (AccC) and two subunits each of ACCase subunit alpha (AccA) and ACCase subunit beta (AccD).

It is found in the cytoplasm. It carries out the reaction N(6)-carboxybiotinyl-L-lysyl-[protein] + acetyl-CoA = N(6)-biotinyl-L-lysyl-[protein] + malonyl-CoA. The protein operates within lipid metabolism; malonyl-CoA biosynthesis; malonyl-CoA from acetyl-CoA: step 1/1. Its function is as follows. Component of the acetyl coenzyme A carboxylase (ACC) complex. First, biotin carboxylase catalyzes the carboxylation of biotin on its carrier protein (BCCP) and then the CO(2) group is transferred by the carboxyltransferase to acetyl-CoA to form malonyl-CoA. This Streptococcus pneumoniae serotype 19F (strain G54) protein is Acetyl-coenzyme A carboxylase carboxyl transferase subunit alpha.